We begin with the raw amino-acid sequence, 265 residues long: Putative hydro-lyase PA14_37210 (265 aa).

The protein belongs to the D-glutamate cyclase family.

This Pseudomonas aeruginosa (strain UCBPP-PA14) protein is Putative hydro-lyase PA14_37210.